Reading from the N-terminus, the 209-residue chain is ATP-dependent dethiobiotin synthetase BioD (209 aa).

13–18 (DIGKTV) provides a ligand contact to ATP. Residue Thr-17 participates in Mg(2+) binding. The active site involves Lys-33. 2 residues coordinate Mg(2+): Arg-47 and Glu-100. ATP contacts are provided by residues 100-103 (EGAG) and 184-186 (PRL).

The protein belongs to the dethiobiotin synthetase family. As to quaternary structure, homodimer. The cofactor is Mg(2+).

The protein resides in the cytoplasm. The enzyme catalyses (7R,8S)-7,8-diammoniononanoate + CO2 + ATP = (4R,5S)-dethiobiotin + ADP + phosphate + 3 H(+). It participates in cofactor biosynthesis; biotin biosynthesis; biotin from 7,8-diaminononanoate: step 1/2. Catalyzes a mechanistically unusual reaction, the ATP-dependent insertion of CO2 between the N7 and N8 nitrogen atoms of 7,8-diaminopelargonic acid (DAPA, also called 7,8-diammoniononanoate) to form a ureido ring. The protein is ATP-dependent dethiobiotin synthetase BioD of Rhodopseudomonas palustris (strain BisB18).